A 181-amino-acid polypeptide reads, in one-letter code: NAD(P)H-quinone oxidoreductase subunit I, chloroplastic (181 aa).

4Fe-4S ferredoxin-type domains follow at residues 52–81 (GRIH…VDWE) and 92–121 (KSYS…MTEE). [4Fe-4S] cluster-binding residues include Cys61, Cys64, Cys67, Cys71, Cys101, Cys104, Cys107, and Cys111.

The protein belongs to the complex I 23 kDa subunit family. NDH is composed of at least 16 different subunits, 5 of which are encoded in the nucleus. It depends on [4Fe-4S] cluster as a cofactor.

It is found in the plastid. Its subcellular location is the chloroplast thylakoid membrane. The enzyme catalyses a plastoquinone + NADH + (n+1) H(+)(in) = a plastoquinol + NAD(+) + n H(+)(out). It catalyses the reaction a plastoquinone + NADPH + (n+1) H(+)(in) = a plastoquinol + NADP(+) + n H(+)(out). Its function is as follows. NDH shuttles electrons from NAD(P)H:plastoquinone, via FMN and iron-sulfur (Fe-S) centers, to quinones in the photosynthetic chain and possibly in a chloroplast respiratory chain. The immediate electron acceptor for the enzyme in this species is believed to be plastoquinone. Couples the redox reaction to proton translocation, and thus conserves the redox energy in a proton gradient. The protein is NAD(P)H-quinone oxidoreductase subunit I, chloroplastic of Staurastrum punctulatum (Green alga).